We begin with the raw amino-acid sequence, 201 residues long: dCTP deaminase, dUMP-forming (201 aa).

DCTP contacts are provided by residues 101–106 (KSSLGR), D119, 127–129 (TLE), Q148, Y162, and Q174. E129 functions as the Proton donor/acceptor in the catalytic mechanism.

This sequence belongs to the dCTP deaminase family. In terms of assembly, homotrimer.

It catalyses the reaction dCTP + 2 H2O = dUMP + NH4(+) + diphosphate. Its pathway is pyrimidine metabolism; dUMP biosynthesis; dUMP from dCTP: step 1/1. Bifunctional enzyme that catalyzes both the deamination of dCTP to dUTP and the hydrolysis of dUTP to dUMP without releasing the toxic dUTP intermediate. This chain is dCTP deaminase, dUMP-forming, found in Clavibacter michiganensis subsp. michiganensis (strain NCPPB 382).